Reading from the N-terminus, the 144-residue chain is Transcriptional regulator MraZ (144 aa).

SpoVT-AbrB domains lie at 5 to 47 (EYDH…TLDE) and 76 to 119 (AVEV…DRET).

It belongs to the MraZ family. As to quaternary structure, forms oligomers.

Its subcellular location is the cytoplasm. It is found in the nucleoid. The protein is Transcriptional regulator MraZ of Staphylococcus aureus.